A 175-amino-acid polypeptide reads, in one-letter code: FMRFamide-like neuropeptides 1 (175 aa).

The first 21 residues, methionine 1–alanine 21, serve as a signal peptide directing secretion. Positions glutamate 22–lysine 68 are excised as a propeptide. A Tyrosine amide modification is found at tyrosine 76. A propeptide spanning residues serine 79–glycine 86 is cleaved from the precursor. Phenylalanine amide occurs at positions 98, 108, 120, 130, 142, and 154. A propeptide spanning residues serine 157 to serine 165 is cleaved from the precursor. Residue phenylalanine 173 is modified to Phenylalanine amide.

Belongs to the FARP (FMRFamide related peptide) family. Post-translationally, may be processed by convertase egl-3. In terms of tissue distribution, each flp gene is expressed in a distinct set of neurons. Flp-1 is expressed in the AVA interneurons, the M5 cholinergic pharyngeal motoneurons, and the AIA, AIY, AVE, AVK, RIG and RMG neurons.

Its subcellular location is the secreted. In terms of biological role, together with flp-18, plays a homeostatic role by acting on the GABAergic neural transmission at neuromuscular junctions to prevent overexcitation of the locomotor circuit. Functionally, inhibits the activity of dissected pharyngeal myogenic muscle system. DPNFLRF-amide: Inhibits the activity of dissected pharyngeal myogenic muscle system. Its function is as follows. Acts as a ligand for the npr-22 receptor in vitro. The protein is FMRFamide-like neuropeptides 1 (flp-1) of Caenorhabditis elegans.